A 368-amino-acid chain; its full sequence is GLABROUS1 enhancer-binding protein-like (368 aa).

The interval 1-123 (MAPKKAEEVV…TSDTEHVKKP (123 aa)) is disordered. Residues 17-31 (SEEEESGSSGEESES) are compositionally biased toward acidic residues. The segment covering 35 to 47 (VPKKVESSQKPES) has biased composition (basic and acidic residues). Residues 84–97 (TSGSAATVPESSTA) show a composition bias toward polar residues. Positions 100–123 (PLKEAAPEAIKKQKTSDTEHVKKP) are enriched in basic and acidic residues.

This sequence belongs to the GeBP family. Mono-, di- and oligomers. Associated with the Mediator complex. Interacts with MED6. Interacts with MED10A, MED28 and MED32. Interacts with DEK3.

Its subcellular location is the nucleus. Transcription factor that binds promoters containing the CryR2 element, 5'-ACATAWCT-3'. The DNA-binding activity is decreased upon direct physical interaction with the mediator subunits and is modulated by redox conditions. The oxidized protein is the preferential binding form. This is GLABROUS1 enhancer-binding protein-like from Arabidopsis thaliana (Mouse-ear cress).